The sequence spans 457 residues: tRNA modification GTPase MnmE (457 aa).

3 residues coordinate (6S)-5-formyl-5,6,7,8-tetrahydrofolate: arginine 22, glutamate 85, and arginine 124. The TrmE-type G domain occupies 219 to 378 (GATVVIAGKP…LKEKIYDLVL (160 aa)). Asparagine 229 is a binding site for K(+). GTP is bound by residues 229–234 (NTGKSS), 248–254 (TPVPGTT), 273–276 (DTAG), and 333–336 (NKAD). A Mg(2+)-binding site is contributed by serine 233. K(+) is bound by residues threonine 248, valine 250, and threonine 253. Residue threonine 254 coordinates Mg(2+). A (6S)-5-formyl-5,6,7,8-tetrahydrofolate-binding site is contributed by lysine 457.

The protein belongs to the TRAFAC class TrmE-Era-EngA-EngB-Septin-like GTPase superfamily. TrmE GTPase family. As to quaternary structure, homodimer. Heterotetramer of two MnmE and two MnmG subunits. K(+) is required as a cofactor.

Its subcellular location is the cytoplasm. Exhibits a very high intrinsic GTPase hydrolysis rate. Involved in the addition of a carboxymethylaminomethyl (cmnm) group at the wobble position (U34) of certain tRNAs, forming tRNA-cmnm(5)s(2)U34. This chain is tRNA modification GTPase MnmE, found in Syntrophus aciditrophicus (strain SB).